Reading from the N-terminus, the 429-residue chain is Phosphoribosylamine--glycine ligase (429 aa).

The 208-residue stretch at 109-316 (KDFLARHQIP…LVELCLAAID (208 aa)) folds into the ATP-grasp domain. 135–196 (VREQGAPIVV…EEFLDGEEAS (62 aa)) lines the ATP pocket. Positions 212–234 (SQDHKRVGDKDTGPNTGGMGAYS) are disordered. The span at 213–223 (QDHKRVGDKDT) shows a compositional bias: basic and acidic residues. 2 residues coordinate Mg(2+): glutamate 286 and asparagine 288.

The protein belongs to the GARS family. Mg(2+) serves as cofactor. It depends on Mn(2+) as a cofactor.

It carries out the reaction 5-phospho-beta-D-ribosylamine + glycine + ATP = N(1)-(5-phospho-beta-D-ribosyl)glycinamide + ADP + phosphate + H(+). The protein operates within purine metabolism; IMP biosynthesis via de novo pathway; N(1)-(5-phospho-D-ribosyl)glycinamide from 5-phospho-alpha-D-ribose 1-diphosphate: step 2/2. This Vibrio vulnificus (strain YJ016) protein is Phosphoribosylamine--glycine ligase.